The following is a 160-amino-acid chain: 2-amino-4-hydroxy-6-hydroxymethyldihydropteridine pyrophosphokinase (160 aa).

Belongs to the HPPK family. Monomer.

The enzyme catalyses 6-hydroxymethyl-7,8-dihydropterin + ATP = (7,8-dihydropterin-6-yl)methyl diphosphate + AMP + H(+). Its pathway is cofactor biosynthesis; tetrahydrofolate biosynthesis; 2-amino-4-hydroxy-6-hydroxymethyl-7,8-dihydropteridine diphosphate from 7,8-dihydroneopterin triphosphate: step 4/4. In terms of biological role, catalyzes the transfer of pyrophosphate from adenosine triphosphate (ATP) to 6-hydroxymethyl-7,8-dihydropterin, an enzymatic step in folate biosynthesis pathway. The polypeptide is 2-amino-4-hydroxy-6-hydroxymethyldihydropteridine pyrophosphokinase (folK) (Haemophilus influenzae (strain ATCC 51907 / DSM 11121 / KW20 / Rd)).